The chain runs to 284 residues: Bifunctional protein FolD (284 aa).

NADP(+)-binding positions include 165 to 167 (GRS), Ser-190, and Val-231.

The protein belongs to the tetrahydrofolate dehydrogenase/cyclohydrolase family. As to quaternary structure, homodimer.

It catalyses the reaction (6R)-5,10-methylene-5,6,7,8-tetrahydrofolate + NADP(+) = (6R)-5,10-methenyltetrahydrofolate + NADPH. The catalysed reaction is (6R)-5,10-methenyltetrahydrofolate + H2O = (6R)-10-formyltetrahydrofolate + H(+). Its pathway is one-carbon metabolism; tetrahydrofolate interconversion. Functionally, catalyzes the oxidation of 5,10-methylenetetrahydrofolate to 5,10-methenyltetrahydrofolate and then the hydrolysis of 5,10-methenyltetrahydrofolate to 10-formyltetrahydrofolate. The sequence is that of Bifunctional protein FolD from Geobacillus thermodenitrificans (strain NG80-2).